The primary structure comprises 224 residues: Phosphoglycolate phosphatase (224 aa).

Catalysis depends on Asp-8, which acts as the Nucleophile. Asp-8, Asp-10, Gly-11, and Gly-43 together coordinate Mg(2+). Lys-151 provides a ligand contact to substrate. The Mg(2+) site is built by Asp-174, Ser-175, and Asp-178.

The protein belongs to the HAD-like hydrolase superfamily. Archaeal SPP-like hydrolase family. As to quaternary structure, homodimer. The cofactor is Mg(2+).

The enzyme catalyses 2-phosphoglycolate + H2O = glycolate + phosphate. Inhibited by Ca(2+) ions and by high chloride ion concentration. By contrast, low chloride concentration (up to 50 mM) slightly activate the enzyme. In terms of biological role, catalyzes the dephosphorylation of 2-phosphoglycolate. Also has significant, but less efficient, pyrophosphatase activity, since it is able to catalyze the release of phosphate from inorganic pyrophosphate (PPi). This Thermoplasma acidophilum (strain ATCC 25905 / DSM 1728 / JCM 9062 / NBRC 15155 / AMRC-C165) protein is Phosphoglycolate phosphatase.